The following is a 194-amino-acid chain: MSSLLDIIYQLRQVPRWDGSFQFEKEDVSQHSFSVIAISHILCELKETLEGKKINKEKLLLYALYHDVTEVVSTHIISPVKKNSILKDPFNAFREQIKNSLFDNLPITLSDTLSTILNNNDLEIQEIVEHADHVDAYCKSCIEVHRGNKDFISIQRSLGDKLDNLTKEYPYLKEFQNLFLKDFPLENKNYRYLN.

Residues arginine 16 and tryptophan 17 each coordinate 4'-phosphooxetanocin A. Residue tryptophan 17 participates in oxetanocin A binding. Mg(2+) is bound by residues histidine 31, histidine 66, and aspartate 67. Positions 75, 78, and 81 each coordinate 4'-phosphooxetanocin A. Positions 75 and 78 each coordinate oxetanocin A. Aspartate 132 is a binding site for Mg(2+).

This sequence belongs to the 5DNU family. As to quaternary structure, homodimer. Requires Mg(2+) as cofactor. The cofactor is Co(2+). Mn(2+) serves as cofactor.

The catalysed reaction is 4'-phosphooxetanocin A + H2O = oxetanocin A + phosphate. Phosphohydrolase involved in the biosynthesis of oxetanocin A (OXT-A), a nucleoside analog with antitumor, antiviral and antibacterial properties. Catalyzes the hydrolysis of phosphooxetanocin A (OXT-A-P) to generate oxetanocin A (OXT-A) and a molecule of inorganic phosphate. Can also bind and hydrolyze OXT triphosphate (OXT-A-PPP) and OXT diphosphate (OXT-A-PP), and thus catalyze the sequential hydrolysis of tri-, di- and mono-phosphorylated oxetanocin A compounds, releasing one molecule of inorganic phosphate at a time. In vitro can also use dATP, dAMP and dADP. This chain is 4'-phosphooxetanocin A phosphatase, found in Priestia megaterium (Bacillus megaterium).